The following is a 485-amino-acid chain: Membrane-bound lytic murein transglycosylase F (485 aa).

The signal sequence occupies residues 1–29 (MFAHTALRQRCAKWLFATGLFLLLGACVE). The non-LT domain stretch occupies residues 30–267 (KPSTLERVKE…RLKDRYYGHV (238 aa)). Residues 268–485 (DVLGYVGAYT…DKPADQSPPM (218 aa)) form an LT domain region. Glu-314 is a catalytic residue. Residues 465–485 (EGNLHVPGVNKDKPADQSPPM) form a disordered region.

In the N-terminal section; belongs to the bacterial solute-binding protein 3 family. The protein in the C-terminal section; belongs to the transglycosylase Slt family.

It is found in the cell outer membrane. The catalysed reaction is Exolytic cleavage of the (1-&gt;4)-beta-glycosidic linkage between N-acetylmuramic acid (MurNAc) and N-acetylglucosamine (GlcNAc) residues in peptidoglycan, from either the reducing or the non-reducing ends of the peptidoglycan chains, with concomitant formation of a 1,6-anhydrobond in the MurNAc residue.. Functionally, murein-degrading enzyme that degrades murein glycan strands and insoluble, high-molecular weight murein sacculi, with the concomitant formation of a 1,6-anhydromuramoyl product. Lytic transglycosylases (LTs) play an integral role in the metabolism of the peptidoglycan (PG) sacculus. Their lytic action creates space within the PG sacculus to allow for its expansion as well as for the insertion of various structures such as secretion systems and flagella. The sequence is that of Membrane-bound lytic murein transglycosylase F from Pseudomonas putida (strain GB-1).